Reading from the N-terminus, the 295-residue chain is Oxidoreductase AN1597 (295 aa).

The protein belongs to the asaB hydroxylase/desaturase family.

The protein operates within secondary metabolite biosynthesis; terpenoid biosynthesis. Functionally, oxidoreductase; part of the gene cluster that mediates the biosynthesis of the diterpene ent-pimara-8(14),15-diene (PD). Within the cluster, the HMG-CoA reductase AN1593 functions in the mevalonate pathway, which produces isoprenoid precursors. The geranylgeranyl pyrophosphate (GGPP) synthase AN1592 is needed in the formation of GGPP, the precursor for diterpenes. Lastly, the pimaradiene synthase pbcA performs the 2 cyclization steps that convert GGPP to ent-pimara-8(14),15-diene. The putative roles of the remaining cluster enzymes in ent-pimara-8(14),15-diene biosynthesis is unclear. The cytochrome P450 monooxygenase AN1598, the glutathione S-transferase AN1595, the oxidoreductases AN1596 and AN1597 probably function as decorative enzymes. It is possible that in biological conditions the compound is oxidized to ent-pimara-8(14),15-dien-19-oic acid, which is a bioactive diterpene compound predominant in many plant extracts. The sequence is that of Oxidoreductase AN1597 from Emericella nidulans (strain FGSC A4 / ATCC 38163 / CBS 112.46 / NRRL 194 / M139) (Aspergillus nidulans).